The following is a 488-amino-acid chain: Glutamyl-tRNA(Gln) amidotransferase subunit A (488 aa).

Catalysis depends on charge relay system residues lysine 78 and serine 153. Catalysis depends on serine 177, which acts as the Acyl-ester intermediate.

This sequence belongs to the amidase family. GatA subfamily. In terms of assembly, heterotrimer of A, B and C subunits.

The enzyme catalyses L-glutamyl-tRNA(Gln) + L-glutamine + ATP + H2O = L-glutaminyl-tRNA(Gln) + L-glutamate + ADP + phosphate + H(+). Functionally, allows the formation of correctly charged Gln-tRNA(Gln) through the transamidation of misacylated Glu-tRNA(Gln) in organisms which lack glutaminyl-tRNA synthetase. The reaction takes place in the presence of glutamine and ATP through an activated gamma-phospho-Glu-tRNA(Gln). The sequence is that of Glutamyl-tRNA(Gln) amidotransferase subunit A from Solidesulfovibrio magneticus (strain ATCC 700980 / DSM 13731 / RS-1) (Desulfovibrio magneticus).